Reading from the N-terminus, the 365-residue chain is Transcription factor KUA1 (365 aa).

The interval 1 to 21 is disordered; the sequence is MTRRCSHCNHNGHNSRTCPNR. The segment at 3 to 20 adopts a CCHC-type zinc-finger fold; the sequence is RRCSHCNHNGHNSRTCPN. Residues 8–18 are compositionally biased toward polar residues; it reads CNHNGHNSRTC. A R/KLFGV (transcriptional repression) motif is present at residues 24–28; the sequence is KLFGV. The disordered stretch occupies residues 41–99; it reads MGNLSHYTGSGSGGHGTGSNTPGSPGDVPDHVAGDGYASEDFVAGSSSSRERKKGTPWT. One can recognise an HTH myb-type domain in the interval 90-146; sequence RERKKGTPWTEEEHRMFLLGLQKLGKGDWRGISRNYVTTRTPTQVASHAQKYFIRQS. Residues 118 to 142 constitute a DNA-binding region (H-T-H motif); that stretch reads WRGISRNYVTTRTPTQVASHAQKYF. Disordered stretches follow at residues 214-254 and 321-365; these read SMDS…QPQL and ESNK…IHAL. The span at 220–254 shows a compositional bias: low complexity; it reads STTGEPTATAAAASSSSRLEETTQLQSQLQPQPQL. Residues 343–355 show a composition bias toward polar residues; that stretch reads RQSAFHPNPSSDS.

Expressed ubiquitously, except in hypocotyls, root tips and lateral root primordia.

It is found in the nucleus. In terms of biological role, transcriptional repressor. Direct regulator of the transcription of peroxidase (Prxs) and reactive oxygen species (ROS)-related genes via the recognition of 5'-ATCACA-3' motif. Binds to 5'-TATCCA-3' motif (TA box) and represses the activity of corresponding promoters (e.g. sugar response genes). Regulates hypocotyl elongation in response to darkness by enhancing auxin accumulation in a phytochrome-interacting factor (PIF) proteins-dependent manner. Promotes lateral roots formation. Promotes cell expansion during leaves development via the modulation of cell wall-located Prxs. Plays a critical role in developmentally regulated and dark-induced onset of leaf senescence by repressing the transcription of several genes involved in chloroplast function and responses to light and auxin. Promotes responses to auxin, abscisic acid (ABA), and ethylene. The protein is Transcription factor KUA1 of Arabidopsis thaliana (Mouse-ear cress).